The chain runs to 1343 residues: MGYSYSEKKRIRKDFGKRPQVLNVPYLLTIQLDSFDKFIQKDPEGQQGLEAAFRSVFPIVSNNGYTELQYVDYRLEEPEFDVRECQIRGSTYAAGLRVKLRLVSYDKESSSRAVKDIKENEVYMGEIPLMTDNGTFVINGTERVIVSQLHRSPGVFFDSDKGKTHSSGKVLYNARIIPYRGSWLDFEFDPKDNLFARIDRRRKLPATIILRALGYTTEEILNLFFDKITFEIAGDKLLMTLVPERLRGETASFDIEANGKVYVERGRRITARHIKALEKDNISQVVVPSEYILGKVASKDYVDLESGEIICPANGEISLETLAKLAQAGYTTIETLFTNDLDYGPYISETLRVDPTYDKTSALYEIYRMMRPGEPPTPESSEALFNNLFFSAERYDLSTVGRMKFNRSLAFPEGEGAGILSNEDIIAVMRKLIDIRNGRGEVDDIDHLGNRRIRSVGEMAENQFRIGLVRVERAVKERLSLGDLDAITPQDLINPKPISAAVKEFFGSSQLSQFMDQNNPLSEVTHKRRISALGPGGLTRERAGFEVRDVHNTHYGRLCPIETPEGPNIGLINSLSAFARTNDYGFLETPYRKVVDGQVTEEIEYLSVIDEANYIIAQANSNLDENNRFTDAFVTARGERGESGLYKPEDIHYMDVSTQQVVSVAAALIPFLEHDDANRALMGANMQRQAVPTLRADKPLVGTGMEKPIALDSGVAVVAKRGGTVQYVDASRIVIKVNEDETIAGEAGIDIYNLIKYTRSNQNTCINQIPCVNLGDPINRGEVLADGPSTDLGELALGQNIRVAFMPWNGYNFEDSMLVSERVVQQDRFTTIHIQELSCVARDTKLGAEEITADIPNVGESALSKLDESGIVYVGAEVKGGDILVGKVTPKGETQLTPEEKLLRAIFGEKASDVKDSSLRVPNGTSGTVIDVQVFTRDGVEKDKRALEIEEMQLREAKKDLTEELEILEAGLFARVRNLLISSGADAAQLDKLDRTKWLEQTIADEEKQNQLEQLAEQYEELRKEFEHKLEVKRKKIIKGDDLAPGVLKVVKVYLAVKRQIQPGDKMAGRHGNKGVISKINPVEDMPYDENGQPVEIVLNPLGVPSRMNIGQILETHLGLAAKGIGDQINAMLKQKQEVEKLRSYIQKAYDLLGNGSQKVDLSTFTDEEVLRLAGNLRKGLPVATPVFDGADEAEIKELLKLGGLPTSGQITLYDGRTGEKFERPVTVGYMYMLKLNHLVDDKMHARSTGSYSLVTQQPLGGKAQFGGQRFGEMEVWALEAYGAAYTLQEMLTVKSDDVNGRTKMYKNIVSGNQHMEPGTPESFNVIMKEIRSLGLNIELDEE.

This sequence belongs to the RNA polymerase beta chain family. As to quaternary structure, the RNAP catalytic core consists of 2 alpha, 1 beta, 1 beta' and 1 omega subunit. When a sigma factor is associated with the core the holoenzyme is formed, which can initiate transcription.

The enzyme catalyses RNA(n) + a ribonucleoside 5'-triphosphate = RNA(n+1) + diphosphate. Functionally, DNA-dependent RNA polymerase catalyzes the transcription of DNA into RNA using the four ribonucleoside triphosphates as substrates. The polypeptide is DNA-directed RNA polymerase subunit beta (Haemophilus influenzae (strain ATCC 51907 / DSM 11121 / KW20 / Rd)).